We begin with the raw amino-acid sequence, 541 residues long: ATP synthase subunit beta (541 aa).

The segment at 1-65 (MAKAVTSSKG…TPVKKEERAK (65 aa)) is disordered. Composition is skewed to basic and acidic residues over residues 25–36 (VKKDASKSKDAS) and 52–65 (AAKD…ERAK). 214 to 221 (GGAGVGKT) contributes to the ATP binding site.

It belongs to the ATPase alpha/beta chains family. As to quaternary structure, F-type ATPases have 2 components, CF(1) - the catalytic core - and CF(0) - the membrane proton channel. CF(1) has five subunits: alpha(3), beta(3), gamma(1), delta(1), epsilon(1). CF(0) has three main subunits: a(1), b(2) and c(9-12). The alpha and beta chains form an alternating ring which encloses part of the gamma chain. CF(1) is attached to CF(0) by a central stalk formed by the gamma and epsilon chains, while a peripheral stalk is formed by the delta and b chains.

It is found in the cell inner membrane. It carries out the reaction ATP + H2O + 4 H(+)(in) = ADP + phosphate + 5 H(+)(out). In terms of biological role, produces ATP from ADP in the presence of a proton gradient across the membrane. The catalytic sites are hosted primarily by the beta subunits. In Bartonella tribocorum (strain CIP 105476 / IBS 506), this protein is ATP synthase subunit beta.